The sequence spans 317 residues: Hairy/enhancer-of-split related with YRPW motif protein 1 (317 aa).

The interval 1–59 (MKRNHDFSSSDSELDENIEVEKESADENAGANSPLGSMSPSTTSQVQARKRRRGIIEKR) is disordered. A compositionally biased stretch (polar residues) spans 30–47 (GANSPLGSMSPSTTSQVQ). Residues 48–103 (ARKRRRGIIEKRRRDRINNSLSELRRLVPSAFEKQGSAKLEKAEILQMTVDHLKML) enclose the bHLH domain. An Orange domain is found at 121 to 157 (YRGLGFRECLAETARYLSIIEGLDNTDPLRIRLVSHL). 2 stretches are compositionally biased toward low complexity: residues 193–226 (QQQQ…SAPS) and 248–264 (PPST…TASK). The disordered stretch occupies residues 193–264 (QQQQQQGAPL…PGLTPPTASK (72 aa)). The YRPW motif motif lies at 307–310 (YRPW).

The protein belongs to the HEY family.

It is found in the nucleus. In terms of biological role, transcriptional repressor which functions as a downstream effector of Notch signaling. The chain is Hairy/enhancer-of-split related with YRPW motif protein 1 (hey1) from Danio rerio (Zebrafish).